A 110-amino-acid chain; its full sequence is Minor capsid protein VP2 (110 aa).

This sequence belongs to the vesivirus VP2 protein family. Homooligomer. The portal-like structure consists in 12 copies of VP2. Interacts with capsid protein VP1.

It is found in the virion. It localises to the host cytoplasm. Minor structural protein that forms a portal-like structure at a unique three-fold axis of symmetry, following binding to the host receptor. The channel formed by VP2 may allow the delivery of the viral genome through the host endosomal membrane. This Vesicular exanthema of swine virus serotype A48 (isolate Swine/United States/A48/1948) (VESV) protein is Minor capsid protein VP2.